The chain runs to 200 residues: Phosphoheptose isomerase (200 aa).

Residues 37–199 (VLGCITAGGK…DVQLLGEQDL (163 aa)) enclose the SIS domain. A substrate-binding site is contributed by 52–54 (NGG). Zn(2+)-binding residues include H61 and E65. Substrate contacts are provided by residues E65, 94–95 (ND), 120–122 (TTS), S125, and Q175. The Zn(2+) site is built by Q175 and H183.

Belongs to the SIS family. GmhA subfamily. Homotetramer. Zn(2+) serves as cofactor.

The protein resides in the cytoplasm. It catalyses the reaction 2 D-sedoheptulose 7-phosphate = D-glycero-alpha-D-manno-heptose 7-phosphate + D-glycero-beta-D-manno-heptose 7-phosphate. Its pathway is carbohydrate biosynthesis; D-glycero-D-manno-heptose 7-phosphate biosynthesis; D-glycero-alpha-D-manno-heptose 7-phosphate and D-glycero-beta-D-manno-heptose 7-phosphate from sedoheptulose 7-phosphate: step 1/1. Functionally, catalyzes the isomerization of sedoheptulose 7-phosphate in D-glycero-D-manno-heptose 7-phosphate. The protein is Phosphoheptose isomerase of Methylibium petroleiphilum (strain ATCC BAA-1232 / LMG 22953 / PM1).